Here is a 302-residue protein sequence, read N- to C-terminus: Sulfate adenylyltransferase subunit 2 (302 aa).

It belongs to the PAPS reductase family. CysD subfamily. As to quaternary structure, heterodimer composed of CysD, the smaller subunit, and CysN.

It catalyses the reaction sulfate + ATP + H(+) = adenosine 5'-phosphosulfate + diphosphate. It functions in the pathway sulfur metabolism; hydrogen sulfide biosynthesis; sulfite from sulfate: step 1/3. Its function is as follows. With CysN forms the ATP sulfurylase (ATPS) that catalyzes the adenylation of sulfate producing adenosine 5'-phosphosulfate (APS) and diphosphate, the first enzymatic step in sulfur assimilation pathway. APS synthesis involves the formation of a high-energy phosphoric-sulfuric acid anhydride bond driven by GTP hydrolysis by CysN coupled to ATP hydrolysis by CysD. The chain is Sulfate adenylyltransferase subunit 2 from Xanthomonas axonopodis pv. citri (strain 306).